The following is a 149-amino-acid chain: Small ribosomal subunit protein uS13 (149 aa).

Residues 118-149 (GRRHELGLPVRGQRTKSTFRKGSSVGVRRKKR) form a disordered region.

Belongs to the universal ribosomal protein uS13 family. In terms of assembly, part of the 30S ribosomal subunit. Forms a loose heterodimer with protein S19. Forms two bridges to the 50S subunit in the 70S ribosome.

Functionally, located at the top of the head of the 30S subunit, it contacts several helices of the 16S rRNA. In the 70S ribosome it contacts the 23S rRNA (bridge B1a) and protein L5 of the 50S subunit (bridge B1b), connecting the 2 subunits; these bridges are implicated in subunit movement. This is Small ribosomal subunit protein uS13 from Methanothermobacter thermautotrophicus (strain ATCC 29096 / DSM 1053 / JCM 10044 / NBRC 100330 / Delta H) (Methanobacterium thermoautotrophicum).